Reading from the N-terminus, the 108-residue chain is Nucleoid-associated protein PSHAa1202 (108 aa).

2 disordered regions span residues 1–20 and 87–108; these read MFKG…QDRM and TQER…KMPF.

The protein belongs to the YbaB/EbfC family. In terms of assembly, homodimer.

The protein localises to the cytoplasm. It localises to the nucleoid. Its function is as follows. Binds to DNA and alters its conformation. May be involved in regulation of gene expression, nucleoid organization and DNA protection. This Pseudoalteromonas translucida (strain TAC 125) protein is Nucleoid-associated protein PSHAa1202.